A 123-amino-acid polypeptide reads, in one-letter code: Small ribosomal subunit protein uS13 (123 aa).

Residues 95-123 (GLPVRGQRTKTNARTRKGPIKTVGAKRKK) are disordered.

Belongs to the universal ribosomal protein uS13 family. Part of the 30S ribosomal subunit. Forms a loose heterodimer with protein S19. Forms two bridges to the 50S subunit in the 70S ribosome.

Functionally, located at the top of the head of the 30S subunit, it contacts several helices of the 16S rRNA. In the 70S ribosome it contacts the 23S rRNA (bridge B1a) and protein L5 of the 50S subunit (bridge B1b), connecting the 2 subunits; these bridges are implicated in subunit movement. Contacts the tRNAs in the A and P-sites. The polypeptide is Small ribosomal subunit protein uS13 (Desulfitobacterium hafniense (strain DSM 10664 / DCB-2)).